Here is a 392-residue protein sequence, read N- to C-terminus: MAIFRDQAENHVEHDRSIEDRRRHRQLVEKSIKENLGDILSEESIIGETKNKKYKIPIRGIKEYQFIYGANNKGVTTGTGEERRGDRISSDKRKAISNNKAGNQEGKDIYETEITLEELMDYIVEDLDLPNLDRKKYSEIIVESAAKKRGYQKYGVRPRLAKKKTVMCKIARKQGKKRALREIGEEAEIGRFPFREDDLRYYKVKKHPKKESNAVMIFIMDVSGSMDNTKKYLARSFFFVLSRFIRRKYNNVAFEFISHTTTAKNVNEYEFFHKGESGGTYISSGINAAIDLIKEKYNPGVWNIYPFYASDGDNWSEDNEKAMEAVNEISDLSNMFGYIELLPSTYSTTMFYRFKKEISKENFVSVTVKEKKDLWNAIKYMLSEELQEKNKE.

Positions 75–100 (VTTGTGEERRGDRISSDKRKAISNNK) are disordered. Basic and acidic residues predominate over residues 80–94 (GEERRGDRISSDKRK).

This sequence belongs to the UPF0229 family.

The chain is UPF0229 protein CPE1333 from Clostridium perfringens (strain 13 / Type A).